We begin with the raw amino-acid sequence, 539 residues long: Aluminum-activated malate transporter 13 (539 aa).

Transmembrane regions (helical) follow at residues 57–77, 80–100, 107–127, 130–150, 165–185, and 192–212; these read VGVALTLVSLLYLMEPFFEGV, NALWAVMTVVVVLEFSAGATL, GLGTLIAGSLAFFIEWVAIHS, ILGGIFIGTSVFTIGSMITYM, LVFLLTFNLITVSSYRVDTVI, and LYTIGMGIGICLFMSLLFFPI.

It belongs to the aromatic acid exporter (TC 2.A.85) family.

The protein resides in the membrane. Malate transporter. The protein is Aluminum-activated malate transporter 13 (ALMT13) of Arabidopsis thaliana (Mouse-ear cress).